Consider the following 711-residue polypeptide: DNA ligase (711 aa).

Residues 39-43 (DAEYD), 88-89 (SL), and Glu-119 each bind NAD(+). Residue Lys-121 is the N6-AMP-lysine intermediate of the active site. Residues Arg-142, Glu-179, Lys-295, and Lys-319 each contribute to the NAD(+) site. Zn(2+)-binding residues include Cys-416, Cys-419, Cys-434, and Cys-440. A BRCT domain is found at 630 to 711 (ESVSSLAGRA…LRELLAGAGA (82 aa)).

This sequence belongs to the NAD-dependent DNA ligase family. LigA subfamily. Mg(2+) serves as cofactor. Mn(2+) is required as a cofactor.

It catalyses the reaction NAD(+) + (deoxyribonucleotide)n-3'-hydroxyl + 5'-phospho-(deoxyribonucleotide)m = (deoxyribonucleotide)n+m + AMP + beta-nicotinamide D-nucleotide.. Functionally, DNA ligase that catalyzes the formation of phosphodiester linkages between 5'-phosphoryl and 3'-hydroxyl groups in double-stranded DNA using NAD as a coenzyme and as the energy source for the reaction. It is essential for DNA replication and repair of damaged DNA. In Halorhodospira halophila (strain DSM 244 / SL1) (Ectothiorhodospira halophila (strain DSM 244 / SL1)), this protein is DNA ligase.